The sequence spans 340 residues: Short-chain dehydrogenase/reductase prx1 (340 aa).

5 residues coordinate NADP(+): isoleucine 60, lysine 84, aspartate 104, asparagine 131, and lysine 162. Catalysis depends on serine 184, which acts as the Proton donor. Residues tyrosine 210 and lysine 214 each contribute to the NADP(+) site. Residue tyrosine 210 is the Proton acceptor of the active site. The active-site Lowers pKa of active site Tyr is lysine 214.

Belongs to the short-chain dehydrogenases/reductases (SDR) family.

It participates in sesquiterpene biosynthesis. In terms of biological role, short-chain dehydrogenase/reductase; part of the gene cluster that mediates the biosynthesis of PR-toxin, a bicyclic sesquiterpene belonging to the eremophilane class and acting as a mycotoxin. The first step of the pathway is catalyzed by the aristolochene synthase which performs the cyclization of trans,trans-farnesyl diphosphate (FPP) to the bicyclic sesquiterpene aristolochene. Following the formation of aristolochene, the non-oxygenated aristolochene is converted to the trioxygenated intermediate eremofortin B, via 7-epi-neopetasone. This conversion appears to involve three enzymes, a hydroxysterol oxidase-like enzyme, the quinone-oxidase prx3 that forms the quinone-type-structure in the bicyclic nucleus of aristolochene with the C8-oxo group and the C-3 hydroxyl group, and the P450 monooxygenase prx9 that introduces the epoxide at the double bond between carbons 1 and 2. No monoxy or dioxy-intermediates have been reported to be released to the broth, so these three early oxidative reactions may be coupled together. Eremofortin B is further oxidized by another P450 monooxygenase, that introduces a second epoxide between carbons 7 and 11 prior to acetylation to eremofortin A by the acetyltransferase prx11. The second epoxidation may be performed by a second P450 monooxygenase. After the acetylation step, eremofortin A is converted to eremofortin C and then to PR-toxin. First the conversion of eremofortin A to eremofortin C proceeds by oxidation of the side chain of the molecule at C-12 and is catalyzed by the short-chain oxidoreductase prx1. The cytochrome P450 monooxygenase prx8 also plays a role in this step. The primary alcohol formed at C-12 is finally oxidized by the short-chain alcohol dehydrogenase prx4 that forms PR-toxin. The protein is Short-chain dehydrogenase/reductase prx1 of Penicillium rubens (strain ATCC 28089 / DSM 1075 / NRRL 1951 / Wisconsin 54-1255) (Penicillium chrysogenum).